Reading from the N-terminus, the 1420-residue chain is ABC transporter G family member 32 (1420 aa).

An ABC transporter 1 domain is found at 135–408; sequence LRNIHVIGGK…FSSLGFTCPD (274 aa). Position 168–175 (168–175) interacts with ATP; sequence GPPSSGKT. Residues 486 to 699 enclose the ABC transmembrane type-2 1 domain; it reads ELLKINFAWQ…AQNAASVNEF (214 aa). 7 helical membrane passes run 504–524, 544–564, 585–605, 623–643, 648–668, 674–694, and 735–755; these read FIYV…MTVF, LYFS…MLVA, LPSW…WVAV, FLLY…MGSL, IVAN…GGFI, IPSW…QNAA, and IGVA…TLFL. Residues 818-1070 form the ABC transporter 2 domain; it reads LSFSNINYYV…ELIKYFESIE (253 aa). Residue 863 to 870 coordinates ATP; sequence GVSGAGKT. Residues 1143–1357 enclose the ABC transmembrane type-2 2 domain; the sequence is SQFVACLWKQ…TLYGLLVSQY (215 aa). Helical transmembrane passes span 1162 to 1182, 1202 to 1222, 1235 to 1255, 1277 to 1297, 1307 to 1327, 1334 to 1354, and 1392 to 1412; these read YTAV…TICW, YAAV…VVSI, MYSA…YVLA, FLWY…YGMM, VASI…GFMI, LWWR…GLLV, and VSAI…AFAI.

The protein belongs to the ABC transporter superfamily. ABCG family. PDR (TC 3.A.1.205) subfamily. Ubiquitous in aerial organs. Higher expression levels in young, expanding tissues than in older tissues. Detected in the epidermal layer.

The protein localises to the cell membrane. Its function is as follows. May be a general defense protein. Required for the formation of the cuticle layer of the cell wall. The protein is ABC transporter G family member 32 of Arabidopsis thaliana (Mouse-ear cress).